A 442-amino-acid polypeptide reads, in one-letter code: Probable glycine dehydrogenase (decarboxylating) subunit 1 (442 aa).

This sequence belongs to the GcvP family. N-terminal subunit subfamily. In terms of assembly, the glycine cleavage system is composed of four proteins: P, T, L and H. In this organism, the P 'protein' is a heterodimer of two subunits.

The catalysed reaction is N(6)-[(R)-lipoyl]-L-lysyl-[glycine-cleavage complex H protein] + glycine + H(+) = N(6)-[(R)-S(8)-aminomethyldihydrolipoyl]-L-lysyl-[glycine-cleavage complex H protein] + CO2. In terms of biological role, the glycine cleavage system catalyzes the degradation of glycine. The P protein binds the alpha-amino group of glycine through its pyridoxal phosphate cofactor; CO(2) is released and the remaining methylamine moiety is then transferred to the lipoamide cofactor of the H protein. This is Probable glycine dehydrogenase (decarboxylating) subunit 1 from Geotalea daltonii (strain DSM 22248 / JCM 15807 / FRC-32) (Geobacter daltonii).